The following is a 499-amino-acid chain: Proline--tRNA ligase (499 aa).

The segment covering 1 to 17 (MTKDGGKKDNQGQDKKA) has biased composition (basic and acidic residues). The tract at residues 1–21 (MTKDGGKKDNQGQDKKAQQYG) is disordered.

This sequence belongs to the class-II aminoacyl-tRNA synthetase family. ProS type 3 subfamily. Homodimer.

The protein resides in the cytoplasm. The enzyme catalyses tRNA(Pro) + L-proline + ATP = L-prolyl-tRNA(Pro) + AMP + diphosphate. Functionally, catalyzes the attachment of proline to tRNA(Pro) in a two-step reaction: proline is first activated by ATP to form Pro-AMP and then transferred to the acceptor end of tRNA(Pro). Can inadvertently accommodate and process cysteine. The sequence is that of Proline--tRNA ligase (proS) from Deinococcus radiodurans (strain ATCC 13939 / DSM 20539 / JCM 16871 / CCUG 27074 / LMG 4051 / NBRC 15346 / NCIMB 9279 / VKM B-1422 / R1).